We begin with the raw amino-acid sequence, 247 residues long: DNA repair protein RecO (247 aa).

The protein belongs to the RecO family.

Involved in DNA repair and RecF pathway recombination. This is DNA repair protein RecO from Alkalilimnicola ehrlichii (strain ATCC BAA-1101 / DSM 17681 / MLHE-1).